The following is a 399-amino-acid chain: Cytohesin-3 (399 aa).

The stretch at 14–61 forms a coiled coil; the sequence is EDLSLEEREELLDIRRRKKELIDDIERLKYEIAEVMTEIDNLTSVEES. Residues 77-206 enclose the SEC7 domain; sequence FNMDPKKGIQ…IIMLNTSLHN (130 aa). A PH domain is found at 264–380; the sequence is NPDREGWLLK…WMKSIKASIS (117 aa). A 1,2-diacyl-sn-glycero-3-phospho-(1D-myo-inositol-3,4,5-trisphosphate) is bound by residues 273 to 280, Arg-284, Tyr-295, Arg-305, and Asn-354; that span reads KLGGRVKT. Residues 391–399 form a C-terminal autoinhibitory region region; the sequence is RKRRIANKK.

Interacts with TAMALIN. Interacts with FRMD4A. Interacts with FRMD4B.

It is found in the cytoplasm. It localises to the cytosol. The protein resides in the cell membrane. The protein localises to the cell junction. Its subcellular location is the adherens junction. It is found in the tight junction. Functionally, promotes guanine-nucleotide exchange on ARF1. Promotes the activation of ARF factors through replacement of GDP with GTP. Plays a role in the epithelial polarization. The chain is Cytohesin-3 (Cyth3) from Mus musculus (Mouse).